The chain runs to 612 residues: 1,8-cineole synthase, chloroplastic (612 aa).

A chloroplast-targeting transit peptide spans 1-52 (MALVSVAPLASRSCLSKSLISSTHELKPLRRTILPTLRWKSATPSINMCLTT). Residues Asp-363, Asp-367, and Asp-515 each contribute to the Mg(2+) site. The DDXXD motif signature appears at 363–367 (DDIYD).

It belongs to the terpene synthase family. Tpsd subfamily. Mg(2+) serves as cofactor. Requires Mn(2+) as cofactor.

The protein localises to the plastid. The protein resides in the chloroplast. The catalysed reaction is (2E)-geranyl diphosphate + H2O = 1,8-cineole + diphosphate. Its pathway is terpene metabolism; oleoresin biosynthesis. Functionally, terpene synthase (TPS) involved in the biosynthesis of monoterpene natural products included in conifer oleoresin secretions and volatile emissions; these compounds contribute to biotic and abiotic stress defense against herbivores and pathogens. Catalyzes the conversion of (2E)-geranyl diphosphate (GPP) to 1,8-cineole. The protein is 1,8-cineole synthase, chloroplastic of Picea sitchensis (Sitka spruce).